The following is a 92-amino-acid chain: Small ribosomal subunit protein uS19c (92 aa).

Belongs to the universal ribosomal protein uS19 family.

It is found in the plastid. The protein resides in the chloroplast. Functionally, protein S19 forms a complex with S13 that binds strongly to the 16S ribosomal RNA. This is Small ribosomal subunit protein uS19c from Guizotia abyssinica (Niger).